The chain runs to 122 residues: Protein NIM1-INTERACTING 2 (122 aa).

The span at 1 to 22 shows a compositional bias: basic and acidic residues; the sequence is MNNSLKKEERVEEDNGKSDGNR. Residues 1-28 form a disordered region; it reads MNNSLKKEERVEEDNGKSDGNRGKPSTE. The involved in NPR1/NIM1 interaction stretch occupies residues 39–45; the sequence is DEFFKIL. Residues 70–74 carry the Nuclear localization signal motif; it reads KKRKR.

Interacts with NPR1 N-terminal region.

It localises to the nucleus. The chain is Protein NIM1-INTERACTING 2 from Arabidopsis thaliana (Mouse-ear cress).